The chain runs to 398 residues: Carbamoyl phosphate synthase small chain (398 aa).

The interval 1–204 is CPSase; the sequence is MSPLLPSFPP…PAYGTLDTGK (204 aa). L-glutamine contacts are provided by serine 53, glycine 256, and glycine 258. Residues 208-395 form the Glutamine amidotransferase type-1 domain; that stretch reads KVVAYDFGVK…VELMNAASKK (188 aa). Catalysis depends on cysteine 284, which acts as the Nucleophile. Residues leucine 285, glutamine 288, asparagine 326, glycine 328, and phenylalanine 329 each contribute to the L-glutamine site. Residues histidine 368 and glutamate 370 contribute to the active site.

Belongs to the CarA family. As to quaternary structure, composed of two chains; the small (or glutamine) chain promotes the hydrolysis of glutamine to ammonia, which is used by the large (or ammonia) chain to synthesize carbamoyl phosphate. Tetramer of heterodimers (alpha,beta)4.

The catalysed reaction is hydrogencarbonate + L-glutamine + 2 ATP + H2O = carbamoyl phosphate + L-glutamate + 2 ADP + phosphate + 2 H(+). The enzyme catalyses L-glutamine + H2O = L-glutamate + NH4(+). It functions in the pathway amino-acid biosynthesis; L-arginine biosynthesis; carbamoyl phosphate from bicarbonate: step 1/1. It participates in pyrimidine metabolism; UMP biosynthesis via de novo pathway; (S)-dihydroorotate from bicarbonate: step 1/3. Small subunit of the glutamine-dependent carbamoyl phosphate synthetase (CPSase). CPSase catalyzes the formation of carbamoyl phosphate from the ammonia moiety of glutamine, carbonate, and phosphate donated by ATP, constituting the first step of 2 biosynthetic pathways, one leading to arginine and/or urea and the other to pyrimidine nucleotides. The small subunit (glutamine amidotransferase) binds and cleaves glutamine to supply the large subunit with the substrate ammonia. The sequence is that of Carbamoyl phosphate synthase small chain from Polynucleobacter necessarius subsp. necessarius (strain STIR1).